A 357-amino-acid chain; its full sequence is Decorin (357 aa).

The N-terminal stretch at 1–16 is a signal peptide; it reads MRLVLLFVLLLPVCLA. Positions 17 to 30 are excised as a propeptide; it reads TRFHQKGLFDFMIE. O-linked (Xyl...) (glycosaminoglycan) serine glycosylation is present at serine 46. 2 disulfides stabilise this stretch: cysteine 52-cysteine 58 and cysteine 56-cysteine 65. 12 LRR repeats span residues 71–91, 92–115, 116–139, 140–160, 161–184, 185–210, 211–231, 232–255, 256–279, 280–302, 303–332, and 333–357; these read ERVPKDLPPDTTLLDLQNNKI, TEIKEGDFKNLKNLHALILVNNKI, SKISPAAFAPLKKLERLYLSKNNL, KELPENMPKSLQEIRAHENEI, SKLRKAVFNGLNQVIVLELGTNPL, KSSGIENGAFQGMKRLSYIRIADTNI, TSIPKGLPPSLTELHLDGNKI, SKIDAEGLSGLTNLAKLGLSFNSI, SSVENGSLNNVPHLRELHLNNNEL, VRVPSGLGEHKYIQVVYLHNNKI, ASIGINDFCPLGYNTKKATYSGVSLFSNPV, and QYWEIQPSAFRCIHERSAVQIGNYK. The N-linked (GlcNAc...) asparagine glycan is linked to asparagine 209. Residue asparagine 260 is glycosylated (N-linked (GlcNAc...) asparagine). A disulfide bridge links cysteine 311 with cysteine 344.

It belongs to the small leucine-rich proteoglycan (SLRP) family. SLRP class I subfamily. In terms of assembly, binds to type I and type II collagen, to fibronectin and TGF-beta. Forms a ternary complex with MFAP2 and ELN. Post-translationally, the attached glycosaminoglycan chain can be either chondroitin sulfate or dermatan sulfate depending upon the tissue of origin.

It is found in the secreted. It localises to the extracellular space. Its subcellular location is the extracellular matrix. Its function is as follows. May affect the rate of fibrils formation. This chain is Decorin (DCN), found in Gallus gallus (Chicken).